We begin with the raw amino-acid sequence, 221 residues long: MAEISAKLVKELREKTGAGMMDCKKALNENDGDLQKAIEWLRQKGIASAEKKSGRTAAEGLVGSYIHTGGRVGVLVEVNCETDFVARGDKFQELVRSIAMQIAACPNVEFVKVEDIPAEIAEREKAIEMGRDDLANKPENIREKIVVGRIEKRLKELTLLDQPYIRDPNISVAELVKQSIAELGENIQVRRFTRFVLGEGIEKAESDFAAEVAAQAAAAQS.

The involved in Mg(2+) ion dislocation from EF-Tu stretch occupies residues 82 to 85 (TDFV).

The protein belongs to the EF-Ts family.

Its subcellular location is the cytoplasm. In terms of biological role, associates with the EF-Tu.GDP complex and induces the exchange of GDP to GTP. It remains bound to the aminoacyl-tRNA.EF-Tu.GTP complex up to the GTP hydrolysis stage on the ribosome. This chain is Elongation factor Ts, found in Synechococcus elongatus (strain ATCC 33912 / PCC 7942 / FACHB-805) (Anacystis nidulans R2).